The sequence spans 123 residues: Protein Wnt-3b (123 aa).

A lipid anchor (O-palmitoleoyl serine; by PORCN) is attached at serine 1. A disulfide bridge connects residues cysteine 89 and cysteine 104. Residue asparagine 90 is glycosylated (N-linked (GlcNAc...) asparagine).

It belongs to the Wnt family. Palmitoleoylation is required for efficient binding to frizzled receptors. Depalmitoleoylation leads to Wnt signaling pathway inhibition.

The protein resides in the secreted. It is found in the extracellular space. It localises to the extracellular matrix. Functionally, ligand for members of the frizzled family of seven transmembrane receptors. Probable developmental protein. May be a signaling molecule which affects the development of discrete regions of tissues. Is likely to signal over only few cell diameters. The protein is Protein Wnt-3b (WNT3B) of Meleagris gallopavo (Wild turkey).